Consider the following 398-residue polypeptide: ATP-dependent (S)-NAD(P)H-hydrate dehydratase 1 (398 aa).

Residues 80-391 (LLRKAFQMIP…GYIGEAFELV (312 aa)) form the YjeF C-terminal domain. Residues Gly187 and 240–246 (NHVEFQR) each bind (6S)-NADPHX. ATP-binding positions include 280 to 284 (KGSID) and 300 to 309 (GSPKRCGGQG). (6S)-NADPHX is bound at residue Asp310.

This sequence belongs to the NnrD/CARKD family. Mg(2+) is required as a cofactor.

It localises to the cytoplasm. It carries out the reaction (6S)-NADHX + ATP = ADP + phosphate + NADH + H(+). It catalyses the reaction (6S)-NADPHX + ATP = ADP + phosphate + NADPH + H(+). Catalyzes the dehydration of the S-form of NAD(P)HX at the expense of ATP, which is converted to ADP. Together with NAD(P)HX epimerase, which catalyzes the epimerization of the S- and R-forms, the enzyme allows the repair of both epimers of NAD(P)HX, a damaged form of NAD(P)H that is a result of enzymatic or heat-dependent hydration. The protein is ATP-dependent (S)-NAD(P)H-hydrate dehydratase 1 of Puccinia graminis f. sp. tritici (strain CRL 75-36-700-3 / race SCCL) (Black stem rust fungus).